The following is a 594-amino-acid chain: Glutamate decarboxylase 1 (594 aa).

The segment covering 1-13 has biased composition (low complexity); sequence MASSTPSSSATSS. Positions 1 to 25 are disordered; the sequence is MASSTPSSSATSSNAGPDPNTTNLR. At serine 78 the chain carries Phosphoserine. 190 to 192 is a 4-aminobutanoate binding site; that stretch reads QLS. Lysine 405 carries the N6-(pyridoxal phosphate)lysine modification. Arginine 567 is a binding site for 4-aminobutanoate.

Belongs to the group II decarboxylase family. In terms of assembly, homodimer. Pyridoxal 5'-phosphate is required as a cofactor.

The enzyme catalyses L-glutamate + H(+) = 4-aminobutanoate + CO2. Its function is as follows. Catalyzes the synthesis of the inhibitory neurotransmitter gamma-aminobutyric acid (GABA) with pyridoxal 5'-phosphate as cofactor. The protein is Glutamate decarboxylase 1 (GAD1) of Sus scrofa (Pig).